Consider the following 495-residue polypeptide: Chromosomal replication initiator protein DnaA (495 aa).

The interval 1 to 91 (MTADPDPPFV…ITALSRHLGQ (91 aa)) is domain I, interacts with DnaA modulators. The tract at residues 91–154 (QRVELGVRIA…TPAAEDPNAV (64 aa)) is domain II. The segment at 155-371 (SLNRRYTFDT…GALIRVTAFA (217 aa)) is domain III, AAA+ region. Gly-199, Gly-201, Lys-202, and Thr-203 together coordinate ATP. The domain IV, binds dsDNA stretch occupies residues 372–495 (SLNKTPIDKS…TTRIRQRAKR (124 aa)).

The protein belongs to the DnaA family. As to quaternary structure, oligomerizes as a right-handed, spiral filament on DNA at oriC.

It is found in the cytoplasm. Functionally, plays an essential role in the initiation and regulation of chromosomal replication. ATP-DnaA binds to the origin of replication (oriC) to initiate formation of the DNA replication initiation complex once per cell cycle. Binds the DnaA box (a 9 base pair repeat at the origin) and separates the double-stranded (ds)DNA. Forms a right-handed helical filament on oriC DNA; dsDNA binds to the exterior of the filament while single-stranded (ss)DNA is stabiized in the filament's interior. The ATP-DnaA-oriC complex binds and stabilizes one strand of the AT-rich DNA unwinding element (DUE), permitting loading of DNA polymerase. After initiation quickly degrades to an ADP-DnaA complex that is not apt for DNA replication. Binds acidic phospholipids. This is Chromosomal replication initiator protein DnaA from Mycobacterium sp. (strain JLS).